The chain runs to 144 residues: UPF0225 protein RSc0270 (144 aa).

It belongs to the UPF0225 family.

This is UPF0225 protein RSc0270 from Ralstonia nicotianae (strain ATCC BAA-1114 / GMI1000) (Ralstonia solanacearum).